The following is a 200-amino-acid chain: Neutrophil gelatinase-associated lipocalin (200 aa).

A signal peptide spans 1–20 (MALSVMCLGLALLGVLQSQA). Q21 bears the Pyrrolidone carboxylic acid mark. 72-74 (YST) contributes to the a carboxymycobactin binding site. 2 N-linked (GlcNAc...) asparagine glycosylation sites follow: N81 and N85. C98 and C197 are disulfide-bonded. Y128 lines the enterobactin pocket. A carboxymycobactin-binding residues include K147, K156, and Y160. K156 contributes to the enterobactin binding site.

The protein belongs to the calycin superfamily. Lipocalin family. As to quaternary structure, monomer. Homodimer; disulfide-linked. Heterodimer; disulfide-linked with MMP9. Post-translationally, N-glycosylated. As to expression, expressed in the cortical tubules of the kidney (at protein level). Also expressed in the medullary tubules of the kidney. Detected in lung, spleen, uterus, vagina and epididymis.

It is found in the secreted. The protein resides in the cytoplasmic granule lumen. It localises to the cytoplasmic vesicle lumen. Iron-trafficking protein involved in multiple processes such as apoptosis, innate immunity and renal development. Binds iron through association with 2,3-dihydroxybenzoic acid (2,3-DHBA), a siderophore that shares structural similarities with bacterial enterobactin, and delivers or removes iron from the cell, depending on the context. Iron-bound form (holo-24p3) is internalized following binding to the SLC22A17 (24p3R) receptor, leading to release of iron and subsequent increase of intracellular iron concentration. In contrast, association of the iron-free form (apo-24p3) with the SLC22A17 (24p3R) receptor is followed by association with an intracellular siderophore, iron chelation and iron transfer to the extracellular medium, thereby reducing intracellular iron concentration. Involved in apoptosis due to interleukin-3 (IL3) deprivation: iron-loaded form increases intracellular iron concentration without promoting apoptosis, while iron-free form decreases intracellular iron levels, inducing expression of the proapoptotic protein BCL2L11/BIM, resulting in apoptosis. Involved in innate immunity; limits bacterial proliferation by sequestering iron bound to microbial siderophores, such as enterobactin. Can also bind siderophores from M.tuberculosis. The protein is Neutrophil gelatinase-associated lipocalin (Lcn2) of Mus musculus (Mouse).